The following is a 766-amino-acid chain: Protein zer-1 homolog (766 aa).

N-acetylalanine is present on Ala2. LRR repeat units lie at residues 226 to 245 (SLVL…IVQL), 246 to 268 (HKLR…KLTR), and 278 to 302 (LGNL…KMEE). ARM repeat units lie at residues 427 to 467 (RSEQ…NFSI), 511 to 556 (DNDH…NITD), 558 to 600 (TPDN…NVAE), 602 to 643 (KELR…HIMF), and 714 to 756 (PDKY…HCSN).

Belongs to the zyg-11 family. As to quaternary structure, interacts with the ELOC-ELOB/Elongin BC complex. Part of an E3 ubiquitin ligase complex including ZER1, CUL2 and Elongin BC. As to expression, expressed in testis, spermatocytes and spermatids (at protein level). Expressed in spermatocytes, spermatids, prostate, skeletal muscle, ovary, small intestine, heart, brain and pancreas.

Its function is as follows. Serves as substrate adapter subunit in the E3 ubiquitin ligase complex ZYG11B-CUL2-Elongin BC. Acts to target substrates bearing N-terminal degrons for proteasomal degradation with the first four residues of substrates being the key recognition elements. Involved in the clearance of proteolytic fragments generated by caspase cleavage during apoptosis since N-terminal glycine degrons are strongly enriched at caspase cleavage sites. Also important in the quality control of protein N-myristoylation in which N-terminal glycine degrons are conditionally exposed after a failure of N-myristoylation. In Homo sapiens (Human), this protein is Protein zer-1 homolog.